The following is a 420-amino-acid chain: ATP-dependent Clp protease ATP-binding subunit ClpX (420 aa).

Positions 3–57 (KKTPGTNGKQKLFCSFCGKEQDAVKRLVAGPGVYICDECISLCNEIIAEDHEHSH) constitute a ClpX-type ZB domain. Cysteine 16, cysteine 19, cysteine 38, and cysteine 41 together coordinate Zn(2+). Residue 122–129 (PTGSGKTL) participates in ATP binding.

This sequence belongs to the ClpX chaperone family. As to quaternary structure, component of the ClpX-ClpP complex. Forms a hexameric ring that, in the presence of ATP, binds to fourteen ClpP subunits assembled into a disk-like structure with a central cavity, resembling the structure of eukaryotic proteasomes.

In terms of biological role, ATP-dependent specificity component of the Clp protease. It directs the protease to specific substrates. Can perform chaperone functions in the absence of ClpP. The chain is ATP-dependent Clp protease ATP-binding subunit ClpX from Leptospira borgpetersenii serovar Hardjo-bovis (strain L550).